The following is a 280-amino-acid chain: MKALVEEIDKKTYNPDIYFTSLDPQARRYTSKKINKQGTISTSRPVKRINYSLADLEARLYTSRSEGDGNSISRQDDRNSKNSHSFEERYTQQEILQSDRRFMELNTENFSDLPNVPTLLSDLTGVPRDRIESTTKPISQTSDGLSALMGGSSFVKEHSKYGHGWVLKPETLREIQLSYKSTKLPKPKRKNTNRIVALKKVLSSKRNLHSFLDSALLNLMDKNVIYHNVYNKRYFKVLPLITTCSICGGYDSISSCVNCGNKICSVSCFKLHNETRCRNR.

A compositionally biased stretch (polar residues) spans 64–73 (RSEGDGNSIS). The tract at residues 64-92 (RSEGDGNSISRQDDRNSKNSHSFEERYTQ) is disordered. Over residues 74-92 (RQDDRNSKNSHSFEERYTQ) the composition is skewed to basic and acidic residues. Positions 244, 247, 256, 259, 264, 268, 272, and 277 each coordinate Zn(2+). The HIT-type zinc-finger motif lies at 244–277 (CSICGGYDSISSCVNCGNKICSVSCFKLHNETRC).

As to quaternary structure, belongs to the SWR1 complex at least composed of ACT1, ARP4, RVB1, RVB2, ARP6, YAF9, VPS71, VPS72, SWC3, SWC4, SWC5, SWR1 and HTZ1.

Its subcellular location is the nucleus. In terms of biological role, participates in the catalytic exchange of histone H2A for the H2A variant HZT1, an euchromatin-specific factor, leading to chromatin remodeling and changes in transcription of targeted genes. Indirectly involved in vacuolar protein sorting. In Saccharomyces cerevisiae (strain ATCC 204508 / S288c) (Baker's yeast), this protein is Vacuolar protein sorting-associated protein 71 (VPS71).